Reading from the N-terminus, the 932-residue chain is 2-oxoglutarate dehydrogenase E1 component (932 aa).

This sequence belongs to the alpha-ketoglutarate dehydrogenase family. As to quaternary structure, homodimer. Part of the 2-oxoglutarate dehydrogenase (OGDH) complex composed of E1 (2-oxoglutarate dehydrogenase), E2 (dihydrolipoamide succinyltransferase) and E3 (dihydrolipoamide dehydrogenase); the complex contains multiple copies of the three enzymatic components (E1, E2 and E3). The cofactor is thiamine diphosphate.

It catalyses the reaction N(6)-[(R)-lipoyl]-L-lysyl-[protein] + 2-oxoglutarate + H(+) = N(6)-[(R)-S(8)-succinyldihydrolipoyl]-L-lysyl-[protein] + CO2. Its function is as follows. E1 component of the 2-oxoglutarate dehydrogenase (OGDH) complex which catalyzes the decarboxylation of 2-oxoglutarate, the first step in the conversion of 2-oxoglutarate to succinyl-CoA and CO(2). The polypeptide is 2-oxoglutarate dehydrogenase E1 component (Staphylococcus aureus (strain MW2)).